The chain runs to 386 residues: ADNQHPTVYQKVASQMHLSSSLSQDVHARYGGIQRPALSQRRFPYGNYSNAGLQTCQATQDLSLIAANASPVFVQAPQEKGLAAFATDFLMGGVSAAVSKTAAAPIERVKLLIQNQDEMIKAGRLSEPYKGIGDCFSRTIKDEGFAALWRGNTANVIRYFPTQALNFAFKDYFKRLFNFKKDRDGYWKWFAGNLASGGGAGASSLLFVYSLDYARTRLANDAKAAKKGGGGRQFDGLVDVYRKTLKSDGVAGLYRGFNISCVGIIVYRGLYFGMYDSLKPVLLTGKMEDSFFASFALGWLITNGAGLASYPIDTVRRRMMMTSGEAVKYKSSFDAFNQILKNEGPKSLFKGAGANVLRAVAGAGVLAGYDKLQVIVFGKKYGSGGG.

A mitochondrion-targeting transit peptide spans 1-76; the sequence is ADNQHPTVYQ…ANASPVFVQA (76 aa). 3 Solcar repeats span residues 83–176, 188–281, and 289–375; these read AAFA…FKRL, KWFA…LKPV, and DSFF…LQVI. The next 5 helical transmembrane spans lie at 85-112, 153-177, 186-206, 257-278, and 292-312; these read FATD…VKLL, TANV…KRLF, YWKW…SSLL, FNIS…YDSL, and FASF…SYPI. ADP contacts are provided by arginine 158 and lysine 170. Arginine 316 is a binding site for ADP. An important for transport activity region spans residues 316–321; it reads RRRMMM. Positions 316-321 match the Nucleotide carrier signature motif motif; that stretch reads RRRMMM. Residues 352 to 372 traverse the membrane as a helical segment; that stretch reads AGANVLRAVAGAGVLAGYDKL.

This sequence belongs to the mitochondrial carrier (TC 2.A.29) family. As to quaternary structure, monomer.

It is found in the mitochondrion inner membrane. It catalyses the reaction ADP(in) + ATP(out) = ADP(out) + ATP(in). The matrix-open state (m-state) is inhibited by the membrane-permeable bongkrekic acid (BKA). The cytoplasmic-open state (c-state) is inhibited by the membrane-impermeable toxic inhibitor carboxyatractyloside (CATR). Functionally, ADP:ATP antiporter that mediates import of ADP into the mitochondrial matrix for ATP synthesis, and export of ATP out to fuel the cell. Cycles between the cytoplasmic-open state (c-state) and the matrix-open state (m-state): operates by the alternating access mechanism with a single substrate-binding site intermittently exposed to either the cytosolic (c-state) or matrix (m-state) side of the inner mitochondrial membrane. This is ADP,ATP carrier protein, mitochondrial (ANT1) from Solanum tuberosum (Potato).